Reading from the N-terminus, the 314-residue chain is Serine protease 46 (314 aa).

Residues 44–281 (VVNGKVVEVG…FTQWIKRQIG (238 aa)) enclose the Peptidase S1 domain. A disulfide bridge connects residues cysteine 69 and cysteine 85. Residues histidine 84 and aspartate 130 each act as charge relay system in the active site. Intrachain disulfides connect cysteine 164–cysteine 239, cysteine 197–cysteine 219, and cysteine 229–cysteine 257. Serine 233 (charge relay system) is an active-site residue. A helical membrane pass occupies residues 293-313 (FLSPFILTGYILLVSLGSLWL).

This sequence belongs to the peptidase S1 family.

It localises to the membrane. This is Serine protease 46 (Prss46) from Rattus norvegicus (Rat).